The primary structure comprises 639 residues: Coiled-coil domain-containing protein 93 homolog (639 aa).

A disordered region spans residues 250 to 275 (KLESQLSGKDGSGKDTTEAEREEEEK). Residues 260-275 (GSGKDTTEAEREEEEK) are compositionally biased toward basic and acidic residues. The stretch at 332–492 (AEKLHRQKIT…KNRDISLIQR (161 aa)) forms a coiled coil.

Belongs to the CCDC93 family.

The polypeptide is Coiled-coil domain-containing protein 93 homolog (Dictyostelium discoideum (Social amoeba)).